Consider the following 406-residue polypeptide: Biofilm regulatory protein A (406 aa).

Positions 1-26 are cleaved as a signal peptide; sequence MKIGKKILIMLVTIFLTSLVALGVYA. Residues 347 to 397 are compositionally biased toward low complexity; that stretch reads SSSASDYSSSGNYSGSSSDYGSSSSYGSNSSSGSSSDYSGQNSYNQGNYQQ. Residues 347 to 406 are disordered; sequence SSSASDYSSSGNYSGSSSDYGSSSSYGSNSSSGSSSDYSGQNSYNQGNYQQPAAGTGIGN.

This sequence belongs to the LytR/CpsA/Psr (LCP) family.

The protein resides in the cell envelope. Involved in biofilm formation, cell division, autolysis and the regulation of acid and oxidative stress tolerance. May be associated with systemic virulence in blood. The polypeptide is Biofilm regulatory protein A (brpA) (Streptococcus mutans serotype c (strain ATCC 700610 / UA159)).